The primary structure comprises 894 residues: Mitogen-activated protein kinase kinase kinase kinase 3 (894 aa).

Residue Met1 is modified to N-acetylmethionine. The region spanning 16–273 (FELIQRIGSG…AEKLLQHPFV (258 aa)) is the Protein kinase domain. ATP is bound by residues 22-30 (IGSGTYGDV) and Lys45. Residue Asp136 is the Proton acceptor of the active site. A Phosphoserine modification is found at Ser329. The disordered stretch occupies residues 339–358 (DPPLRKETEPHHELPDSDGF). The segment covering 340-353 (PPLRKETEPHHELP) has biased composition (basic and acidic residues). The residue at position 398 (Ser398) is a Phosphoserine. The disordered stretch occupies residues 408-537 (HVAHLEDDEG…VPKPISNGLP (130 aa)). Residues 473-487 (HVPPRPPPPRLPPQK) show a composition bias toward pro residues. A compositionally biased stretch (polar residues) spans 508-520 (LYQQQSEQRGTNL). Positions 556-867 (PLKIHCATSW…IFRLLGSDRV (312 aa)) constitute a CNH domain.

This sequence belongs to the protein kinase superfamily. STE Ser/Thr protein kinase family. STE20 subfamily. As to quaternary structure, interacts with SH3GL2. Interaction appears to regulate MAP4K3-mediated JNK activation. Mg(2+) is required as a cofactor.

It carries out the reaction L-seryl-[protein] + ATP = O-phospho-L-seryl-[protein] + ADP + H(+). The enzyme catalyses L-threonyl-[protein] + ATP = O-phospho-L-threonyl-[protein] + ADP + H(+). Serine/threonine kinase that plays a role in the response to environmental stress. Appears to act upstream of the JUN N-terminal pathway. Activator of the Hippo signaling pathway which plays a pivotal role in organ size control and tumor suppression by restricting proliferation and promoting apoptosis. MAP4Ks act in parallel to and are partially redundant with STK3/MST2 and STK4/MST2 in the phosphorylation and activation of LATS1/2, and establish MAP4Ks as components of the expanded Hippo pathway. The sequence is that of Mitogen-activated protein kinase kinase kinase kinase 3 (Map4k3) from Mus musculus (Mouse).